A 337-amino-acid chain; its full sequence is Alcohol dehydrogenase 1 (337 aa).

Residues Cys-37, His-58, Cys-89, Cys-92, Cys-95, Cys-103, and Cys-145 each contribute to the Zn(2+) site.

This sequence belongs to the zinc-containing alcohol dehydrogenase family. As to quaternary structure, multimeric (with different ratios of monomers). Zn(2+) serves as cofactor.

The catalysed reaction is a primary alcohol + NAD(+) = an aldehyde + NADH + H(+). The enzyme catalyses a secondary alcohol + NAD(+) = a ketone + NADH + H(+). It participates in alcohol metabolism; ethanol biosynthesis via fermentation pathway. Inhibited by ethanol. The sequence is that of Alcohol dehydrogenase 1 (adhA) from Zymomonas mobilis subsp. mobilis (strain ATCC 31821 / ZM4 / CP4).